Reading from the N-terminus, the 353-residue chain is Glycerol-3-phosphate dehydrogenase [NAD(+)], cytoplasmic (353 aa).

Blocked amino end (Ala) is present on alanine 2. Residues 11-16 (GSGNWG), phenylalanine 98, lysine 121, and alanine 155 each bind NAD(+). Residue lysine 121 participates in substrate binding. Residue lysine 206 is the Proton acceptor of the active site. The NAD(+) site is built by arginine 270 and glutamine 299. A substrate-binding site is contributed by 270 to 271 (RN).

Belongs to the NAD-dependent glycerol-3-phosphate dehydrogenase family. Homodimer.

The protein localises to the cytoplasm. The enzyme catalyses sn-glycerol 3-phosphate + NAD(+) = dihydroxyacetone phosphate + NADH + H(+). Its pathway is phospholipid metabolism; alpha-glycerophosphate cycle. In Drosophila virilis (Fruit fly), this protein is Glycerol-3-phosphate dehydrogenase [NAD(+)], cytoplasmic.